Reading from the N-terminus, the 1052-residue chain is ATP-dependent DNA helicase MPH1 (1052 aa).

The region spanning 89–256 is the Helicase ATP-binding domain; that stretch reads IVRKGLLQNI…EVVNNLNISK (168 aa). 102 to 109 lines the ATP pocket; sequence IPTGMGKT. Positions 204–207 match the DEAH box motif; sequence DEAH. Residues 432–649 form the Helicase C-terminal domain; the sequence is ELTQFFYENP…HLVQYRKSDR (218 aa). Disordered regions lie at residues 495–550, 798–832, 869–898, and 1002–1052; these read HGPK…NQKQ, IGDT…DLPL, SKRQ…QPEV, and HTVS…DSDF. The segment covering 503–532 has biased composition (basic and acidic residues); that stretch reads SDREKRLEEERRMDEEKKQAALQEKLERTS. The segment covering 534–549 has biased composition (polar residues); it reads RTGSSEEAQLSGMNQK. Low complexity-rich tracts occupy residues 875-898 and 1005-1028; these read QPEV…QPEV and SQSQ…QQAS. Residues 1029–1040 show a composition bias toward basic and acidic residues; the sequence is QKDRSSQDKDLT. Over residues 1043–1052 the composition is skewed to acidic residues; the sequence is ELEDLLDSDF.

This sequence belongs to the DEAD box helicase family. DEAH subfamily. FANCM sub-subfamily. In terms of assembly, interacts with the MHF histone-fold complex to form the FANCM-MHF complex.

It is found in the nucleus. It catalyses the reaction ATP + H2O = ADP + phosphate + H(+). Its function is as follows. ATP-dependent DNA helicase involved in DNA damage repair by homologous recombination and in genome maintenance. Capable of unwinding D-loops. Plays a role in limiting crossover recombinants during mitotic DNA double-strand break (DSB) repair. Component of a FANCM-MHF complex which promotes gene conversion at blocked replication forks, probably by reversal of the stalled fork. This Candida glabrata (strain ATCC 2001 / BCRC 20586 / JCM 3761 / NBRC 0622 / NRRL Y-65 / CBS 138) (Yeast) protein is ATP-dependent DNA helicase MPH1.